The chain runs to 154 residues: Ascorbate-specific PTS system EIIA component (154 aa).

Positions 6–150 (SLAENKSIRL…QEVLDLIDRT (145 aa)) constitute a PTS EIIA type-2 domain. Residue histidine 68 is the Tele-phosphohistidine intermediate of the active site. Histidine 68 bears the Phosphohistidine mark.

The protein resides in the cytoplasm. Functionally, the phosphoenolpyruvate-dependent sugar phosphotransferase system (sugar PTS), a major carbohydrate active transport system, catalyzes the phosphorylation of incoming sugar substrates concomitantly with their translocation across the cell membrane. The enzyme II UlaABC PTS system is involved in ascorbate transport. The protein is Ascorbate-specific PTS system EIIA component (ulaC) of Shigella boydii serotype 4 (strain Sb227).